Here is an 863-residue protein sequence, read N- to C-terminus: MICAL-like protein 1 (863 aa).

A Calponin-homology (CH) domain is found at 2–108 (AGPRGALLAW…YVSQYYNHFC (107 aa)). Disordered stretches follow at residues 119–162 (RKGL…TPSS) and 224–670 (GTRS…PLIK). The span at 125 to 135 (CSPPSVAPTPV) shows a compositional bias: pro residues. Low complexity-rich tracts occupy residues 143-159 (GEEL…TGQT) and 224-244 (GTRS…HQQQ). An LIM zinc-binding domain is found at 162 to 225 (STCAACQQHV…EHCARLGPGT (64 aa)). Residues Ser-295 and Ser-309 each carry the phosphoserine modification. Thr-318 bears the Phosphothreonine mark. Residues 325 to 340 (LQQENLVEQAGSSSLV) are compositionally biased toward polar residues. Pro residues predominate over residues 384 to 395 (APLPPSSSPGPP). A Phosphoserine modification is found at Ser-391. An NPF1 motif is present at residues 425–427 (NPF). Residues 427-438 (FEEEEEDKEEEA) show a composition bias toward acidic residues. Low complexity predominate over residues 439–450 (PAAPSLATSPAL). 2 positions are modified to phosphothreonine: Thr-467 and Thr-469. 4 positions are modified to phosphoserine: Ser-470, Ser-471, Ser-484, and Ser-486. Composition is skewed to low complexity over residues 482-495 (APSA…ASRL), 505-520 (PSPA…ESAS), and 553-566 (SLST…SGEL). Ser-578 and Ser-621 each carry phosphoserine. An NPF2 motif is present at residues 633–635 (NPF). Over residues 638-656 (KPSPAASPATKKATKGSKP) the composition is skewed to low complexity. Residues 652 to 863 (KGSKPVRPPA…AKSKSPRDKS (212 aa)) are mediates the interaction with RAB13 and RAB35 and intramolecular interaction with the CH domain. The region spanning 671-818 (RKVQADQYIP…EEEEDKMLEA (148 aa)) is the bMERB domain. Residues 682–711 (EDIHGEMDTIERRLDALEHRGVLLEEKLRG) are a coiled coil. Residues 700-863 (HRGVLLEEKL…AKSKSPRDKS (164 aa)) are necessary and sufficient to associate with tubular recycling endosome membranes, mediate phosphatidic acid-binding and membrane tubulation. Ser-740 carries the phosphoserine modification. A coiled-coil region spans residues 785–830 (MQELVTLIEQRNAIINCLDEDRQREEEEDKMLEAMIKKKEFQREAE).

As to quaternary structure, homooligomer. Interacts (via NPF1 motif) with EHD1 (via EH domain); the interaction is direct and probably recruits EHD1 to membranes. Interacts with EHD3 (via EH domain). Interacts with RAB35 (GTP-bound form); the interaction is direct and probably recruits MICALL1 to membranes. Interacts with ACAP2; the interaction is indirect through RAB35. Interacts with RAB8A (GTP-bound form); regulates RAB8A association with recycling endosomes. Interacts with RAB13 (GTP-bound form). Interacts with ARF6 (GTP-bound form). Interacts with PACSIN2 (via the SH3 domain). Interacts with DPYSL2.

Its subcellular location is the recycling endosome membrane. The protein localises to the late endosome membrane. It is found in the cell projection. The protein resides in the cilium membrane. It localises to the cytoplasm. Its subcellular location is the cytoskeleton. The protein localises to the microtubule organizing center. It is found in the centrosome. The protein resides in the centriole. Lipid-binding protein with higher affinity for phosphatidic acid, a lipid enriched in recycling endosome membranes. On endosome membranes, acts as a downstream effector of Rab proteins recruiting cytosolic proteins to regulate membrane tubulation. Involved in a late step of receptor-mediated endocytosis regulating for instance endocytosed-EGF receptor trafficking. Alternatively, regulates slow endocytic recycling of endocytosed proteins back to the plasma membrane. Also involved in cargo protein delivery to the plasma membrane. Plays a role in ciliogenesis coordination, recruits EHD1 to primary cilium where it is anchored to the centriole through interaction with tubulins. May indirectly play a role in neurite outgrowth. In Homo sapiens (Human), this protein is MICAL-like protein 1 (MICALL1).